The following is a 329-amino-acid chain: Diaminopimelate epimerase (329 aa).

2 residues coordinate substrate: Asn-14 and Asn-73. Cys-82 serves as the catalytic Proton donor. Residues 83–84 (GN), Asn-170, Asn-206, and 224–225 (ER) each bind substrate. Cys-233 serves as the catalytic Proton acceptor. Residue 234-235 (GT) participates in substrate binding.

This sequence belongs to the diaminopimelate epimerase family. In terms of assembly, homodimer.

Its subcellular location is the cytoplasm. The enzyme catalyses (2S,6S)-2,6-diaminopimelate = meso-2,6-diaminopimelate. It participates in amino-acid biosynthesis; L-lysine biosynthesis via DAP pathway; DL-2,6-diaminopimelate from LL-2,6-diaminopimelate: step 1/1. Functionally, catalyzes the stereoinversion of LL-2,6-diaminopimelate (L,L-DAP) to meso-diaminopimelate (meso-DAP), a precursor of L-lysine and an essential component of the bacterial peptidoglycan. The polypeptide is Diaminopimelate epimerase (Listeria innocua serovar 6a (strain ATCC BAA-680 / CLIP 11262)).